Reading from the N-terminus, the 210-residue chain is Uracil phosphoribosyltransferase (210 aa).

5-phospho-alpha-D-ribose 1-diphosphate is bound by residues arginine 80, arginine 105, and aspartate 132–serine 140. Uracil contacts are provided by residues isoleucine 195 and glycine 200–alanine 202. Residue aspartate 201 participates in 5-phospho-alpha-D-ribose 1-diphosphate binding.

The protein belongs to the UPRTase family. Mg(2+) is required as a cofactor.

The catalysed reaction is UMP + diphosphate = 5-phospho-alpha-D-ribose 1-diphosphate + uracil. The protein operates within pyrimidine metabolism; UMP biosynthesis via salvage pathway; UMP from uracil: step 1/1. With respect to regulation, allosterically activated by GTP. In terms of biological role, catalyzes the conversion of uracil and 5-phospho-alpha-D-ribose 1-diphosphate (PRPP) to UMP and diphosphate. This chain is Uracil phosphoribosyltransferase, found in Caldanaerobacter subterraneus subsp. tengcongensis (strain DSM 15242 / JCM 11007 / NBRC 100824 / MB4) (Thermoanaerobacter tengcongensis).